The following is a 413-amino-acid chain: MNAEIISVGTEILLGEIVDTNAVYLSQLFAKLGIDVFNKITVGDNEKNIMDALEVASKRSDLVVTIGGLGPTEDDITKQSLAKFVGKNLKHHPEALQQITDYFKKQNRPLTKNNERQALLLDGAKPIHNPNGLALGIFYHTEQTDYIVLPGPPSEFEPMVDEKVLPLLSQQYGLEKTIQSKTLHFVGIGEADLAARVDEIVRNQSNPTIALYFKPTDVTIRLTAKANSKLAAEEILNHTKKQLLDRVGEFFYAEGDRVSFTDFVVNQLIKRNISLTAAESLTGGAFESTVVETSGAATIFPGGFVTYADEVKSKLIGVQPATIEENTVVSRQVAEEMARGAQKTLDTDIAVSFTGVAGPGALEHHQPGNVWIGLAKRDGSIVTKEFNFVGNREKIRHLAVMNGFRMIWENVIK.

It belongs to the CinA family.

This is Putative competence-damage inducible protein from Pediococcus pentosaceus (strain ATCC 25745 / CCUG 21536 / LMG 10740 / 183-1w).